We begin with the raw amino-acid sequence, 306 residues long: Mitochondrial glycine transporter (306 aa).

Solcar repeat units follow at residues 25-114, 121-205, and 217-301; these read QPVI…LKQY, PTAL…TKNV, and LVPV…MMAK. Helical transmembrane passes span 31-56, 89-115, 127-152, 180-203, 221-247, and 276-294; these read FLCG…TRLQ, GMSP…KQYF, VILG…TRYE, GLTA…SQTK, VNFS…KTHM, and GSVP…AWTV.

This sequence belongs to the mitochondrial carrier (TC 2.A.29) family. SLC25A38 subfamily.

It is found in the mitochondrion inner membrane. The catalysed reaction is glycine(in) = glycine(out). Its function is as follows. Mitochondrial glycine transporter that imports glycine into the mitochondrial matrix. Plays an important role in providing glycine for the first enzymatic step in heme biosynthesis, the condensation of glycine with succinyl-CoA to produce 5-aminolevulinate (ALA) in the mitochondrial matrix. Required during erythropoiesis. In terms of biological role, plays a role as pro-apoptotic protein that induces caspase-dependent apoptosis. This chain is Mitochondrial glycine transporter, found in Ovis aries (Sheep).